Here is an 83-residue protein sequence, read N- to C-terminus: Weak neurotoxin WNTX33 (83 aa).

The first 21 residues, 1 to 21 (MKTLLLTLVVVTIVCLDLGYS), serve as a signal peptide directing secretion. 4 disulfides stabilise this stretch: Cys-24-Cys-45, Cys-38-Cys-62, Cys-64-Cys-75, and Cys-76-Cys-81.

It belongs to the three-finger toxin family. Short-chain subfamily. Expressed by the venom gland.

It localises to the secreted. In Ophiophagus hannah (King cobra), this protein is Weak neurotoxin WNTX33.